The chain runs to 150 residues: Putative FAD-linked sulfhydryl oxidase 088R (150 aa).

The region spanning 24 to 128 (GPFGPSGFGP…VTLQKAICIY (105 aa)) is the ERV/ALR sulfhydryl oxidase domain. A disulfide bond links C74 and C77.

FAD serves as cofactor.

It catalyses the reaction 2 R'C(R)SH + O2 = R'C(R)S-S(R)CR' + H2O2. Its function is as follows. FAD-dependent sulfhydryl oxidase that catalyzes disulfide bond formation. This Dryophytes versicolor (chameleon treefrog) protein is Putative FAD-linked sulfhydryl oxidase 088R.